Reading from the N-terminus, the 583-residue chain is Arginine--tRNA ligase (583 aa).

The short motif at 123–133 (PNIAKEMHVGH) is the 'HIGH' region element.

Belongs to the class-I aminoacyl-tRNA synthetase family. In terms of assembly, monomer.

The protein localises to the cytoplasm. The catalysed reaction is tRNA(Arg) + L-arginine + ATP = L-arginyl-tRNA(Arg) + AMP + diphosphate. This Blochmanniella floridana protein is Arginine--tRNA ligase.